Here is a 267-residue protein sequence, read N- to C-terminus: Transcription factor LBX1 (267 aa).

Basic and acidic residues predominate over residues 1–21 (MTSKDEAKSSASSVEERRRNA). The disordered stretch occupies residues 1–36 (MTSKDEAKSSASSVEERRRNALDLLPPPANSNKPLT). Residues 127–186 (RRKSRTAFTNHQIYELEKRFLYQKYLSPADRDQIAQQLGLTNAQVITWFQNRRAKLKRDL) constitute a DNA-binding region (homeobox). The disordered stretch occupies residues 211–267 (SELEESGSERGNSRSRSPQLGLTSNHMPLSPSXPLTDQHASKECSEDEEDVEIDVDD). Positions 228 to 237 (PQLGLTSNHM) are enriched in polar residues. The segment covering 255-267 (SEDEEDVEIDVDD) has biased composition (acidic residues).

In terms of tissue distribution, expressed in all myoblasts that will populate body wall muscles as well as in a group of cells the migrate into the head.

Its subcellular location is the nucleus. Transcription factor that controls hypaxial muscle development by down-regulating myod1 and cdkn1b/p27, thereby allowing myoblasts to proliferate before the onset of terminal differentiation. This chain is Transcription factor LBX1, found in Xenopus laevis (African clawed frog).